The chain runs to 635 residues: 1-deoxy-D-xylulose-5-phosphate synthase (635 aa).

Residues His72 and 113 to 115 (GHA) each bind thiamine diphosphate. Asp144 contributes to the Mg(2+) binding site. Thiamine diphosphate contacts are provided by residues 145-146 (GA), Asn174, Tyr286, and Glu369. Mg(2+) is bound at residue Asn174.

This sequence belongs to the transketolase family. DXPS subfamily. In terms of assembly, homodimer. It depends on Mg(2+) as a cofactor. Thiamine diphosphate serves as cofactor.

It catalyses the reaction D-glyceraldehyde 3-phosphate + pyruvate + H(+) = 1-deoxy-D-xylulose 5-phosphate + CO2. It participates in metabolic intermediate biosynthesis; 1-deoxy-D-xylulose 5-phosphate biosynthesis; 1-deoxy-D-xylulose 5-phosphate from D-glyceraldehyde 3-phosphate and pyruvate: step 1/1. Its function is as follows. Catalyzes the acyloin condensation reaction between C atoms 2 and 3 of pyruvate and glyceraldehyde 3-phosphate to yield 1-deoxy-D-xylulose-5-phosphate (DXP). This Gloeothece citriformis (strain PCC 7424) (Cyanothece sp. (strain PCC 7424)) protein is 1-deoxy-D-xylulose-5-phosphate synthase.